Reading from the N-terminus, the 58-residue chain is LKCYGIFRKIMTCPQGQNICEKFAYSPMHNGWMYSWGCTSNCHKGPLDKCCSTDLCNY.

Cystine bridges form between Cys3–Cys20, Cys13–Cys38, Cys42–Cys50, and Cys51–Cys56.

Belongs to the three-finger toxin family. Short-chain subfamily. In terms of tissue distribution, expressed by the venom gland.

It is found in the secreted. Produces peripheral paralysis by blocking neuromuscular transmission at the postsynaptic site. Binds to and inhibits the endogenous nicotinic acetylcholine receptors (nAChR) in the human rhabdomyosarcoma TE 671 cell line with an IC(50) of 266 mM. Not toxic to mice by intraperitoneal injection or to zebrafish by injection at the back dorsolateral region. This Micrurus surinamensis (Surinam coral snake) protein is Short neurotoxin MS11.